A 463-amino-acid polypeptide reads, in one-letter code: Regulator of microtubule dynamics protein 3 (463 aa).

Residues 1–4 are Mitochondrial intermembrane-facing; that stretch reads MSKL. The chain crosses the membrane as a helical span at residues 5–27; that stretch reads ILSYRIGLGLVVGAAAGAVIYIV. The Cytoplasmic portion of the chain corresponds to 28–463; the sequence is FRRNRKKTRK…PATAEEELLV (436 aa). An FFAT motif is present at residues 146–161; that stretch reads IYFTATSGAAHTDAES. Residues 153–192 are disordered; sequence GAAHTDAESEGGYSTAYAESDFERESSRASEAEEEDEVSC. Residues 173–183 are compositionally biased toward basic and acidic residues; sequence DFERESSRASE. A coiled-coil region spans residues 279–302; it reads AEDAQEKKSFASEGKEEAEAALQK.

The protein belongs to the RMDN family. In terms of assembly, interacts with PTPN2. Interacts with microtubules. Interacts with VAPB. Interacts (FFAT motif) with MOSPD2 (via MSP domain).

It localises to the mitochondrion outer membrane. The protein resides in the cytoplasm. The protein localises to the nucleus. Its subcellular location is the cytoskeleton. It is found in the spindle. It localises to the spindle pole. Its function is as follows. Involved in cellular calcium homeostasis regulation. The chain is Regulator of microtubule dynamics protein 3 (rmdn3) from Xenopus laevis (African clawed frog).